The primary structure comprises 235 residues: MRFEQPLEEGRLLRRYKRFLADIESAGGERLTIHCPNTGSMLNCMSEGCRVWFSRSNDPKRKLPGTWELSETPQGRLACVNTARANRLVEEALLAGDIAELAGFTALRREVAYGVENSRADFRLEYPTGALFIEVKSVTLGFDETAVAAFPDAVTLRGAKHLRELAALAREGIRAVQLYCVNLSGVEAVRPADEIDPAYGKALREAAQAGVEVLAYGAEVTTEGLHLARRLPVRL.

Belongs to the SfsA family.

This Pseudomonas aeruginosa (strain LESB58) protein is Sugar fermentation stimulation protein homolog.